A 750-amino-acid chain; its full sequence is MIIRSPEPEVKIVVDRDPIKTSFEAWARPGHFSRTIAKGPDTTTWIWNLHADAHDFDSHTSDLEEISRKVFSAHFGQLSIIFLWLSGMYFHGARFSNYEAWLSDPTHIRPSAQVVWPIVGQEILNGDVGGGFRGIQITSGFFQIWRASGITSELQLYCTAIGALVFAALMLFAGWFHYHKAAPKLAWFQDVESMLNHHLAGLLGLGSLSWAGHQIHVSLPINQFLDAGVDPKEIPLPHEFILNRDLLAQLYPSFAEGATPFFTLNWSKYAEFLTFRGGLDPITGGLWLSDIAHHHLAIAILFLIAGHMYRTNWGIGHGLKDILEAHKGPFTGQGHKGLYEILTTSWHAQLALNLAMLGSLTIVVAHHMYSMPPYPYLATDYGTQLSLFTHHMWIGGFLIVGAAAHAAIFMVRDYDPTTRYNDLLDRVLRHRDAIISHLNWACIFLGFHSFGLYIHNDTMSALGRPQDMFSDTAIQLQPIFAQWVQNTHALAPVATAPGATTGTSLAWGGGELVAVGGKVALLPIPLGTADFLVHHIHAFTIHVTVLILLKGVLFARSSRLIPDKANLGFRFPCDGPGRGGTCQVSAWDHVFLGLFWMYNSISVVIFHFSWKMQSDVWGSISDQGVVTHITGGNFAQSSITINGWLRDFLWAQASQVIQSYGSSLSAYGLFFLGAHFVWAFSLMFLFSGRGYWQELIESIVWAHNKLKVAPATQPRALSIVQGRAVGVTHYLLGGIATTWAFFLARIIAVG.

The next 8 membrane-spanning stretches (helical) occupy residues 70–93, 156–179, 195–219, 291–309, 346–369, 385–411, 433–455, and 531–549; these read VFSA…FHGA, LYCT…FHYH, LNHH…HVSL, IAHH…GHMY, WHAQ…HHMY, LSLF…IFMV, AIIS…LYIH, and FLVH…LILL. [4Fe-4S] cluster-binding residues include C573 and C582. The next 2 membrane-spanning stretches (helical) occupy residues 589–610 and 664–686; these read HVFL…HFSW and LSAY…MFLF. H675 is a binding site for chlorophyll a'. Chlorophyll a contacts are provided by M683 and Y691. Position 692 (W692) interacts with phylloquinone. The helical transmembrane segment at 724–744 threads the bilayer; sequence AVGVTHYLLGGIATTWAFFLA.

The protein belongs to the PsaA/PsaB family. The PsaA/B heterodimer binds the P700 chlorophyll special pair and subsequent electron acceptors. PSI consists of a core antenna complex that captures photons, and an electron transfer chain that converts photonic excitation into a charge separation. The eukaryotic PSI reaction center is composed of at least 11 subunits. The cofactor is P700 is a chlorophyll a/chlorophyll a' dimer, A0 is one or more chlorophyll a, A1 is one or both phylloquinones and FX is a shared 4Fe-4S iron-sulfur center..

Its subcellular location is the plastid. The protein localises to the chloroplast thylakoid membrane. It carries out the reaction reduced [plastocyanin] + hnu + oxidized [2Fe-2S]-[ferredoxin] = oxidized [plastocyanin] + reduced [2Fe-2S]-[ferredoxin]. Its function is as follows. PsaA and PsaB bind P700, the primary electron donor of photosystem I (PSI), as well as the electron acceptors A0, A1 and FX. PSI is a plastocyanin-ferredoxin oxidoreductase, converting photonic excitation into a charge separation, which transfers an electron from the donor P700 chlorophyll pair to the spectroscopically characterized acceptors A0, A1, FX, FA and FB in turn. Oxidized P700 is reduced on the lumenal side of the thylakoid membrane by plastocyanin. In Acorus calamus (Sweet flag), this protein is Photosystem I P700 chlorophyll a apoprotein A1.